The primary structure comprises 232 residues: 2,3-bisphosphoglycerate-dependent phosphoglycerate mutase (232 aa).

Residues 10-17 (RHGESIWN), 23-24 (TG), arginine 62, 89-92 (ERHY), lysine 100, 116-117 (RR), and 185-186 (GN) each bind substrate. Histidine 11 acts as the Tele-phosphohistidine intermediate in catalysis. The Proton donor/acceptor role is filled by glutamate 89.

Belongs to the phosphoglycerate mutase family. BPG-dependent PGAM subfamily. Homodimer.

The catalysed reaction is (2R)-2-phosphoglycerate = (2R)-3-phosphoglycerate. It functions in the pathway carbohydrate degradation; glycolysis; pyruvate from D-glyceraldehyde 3-phosphate: step 3/5. Catalyzes the interconversion of 2-phosphoglycerate and 3-phosphoglycerate. This Buchnera aphidicola subsp. Baizongia pistaciae (strain Bp) protein is 2,3-bisphosphoglycerate-dependent phosphoglycerate mutase.